The following is a 289-amino-acid chain: Ribosomal protein L11 methyltransferase (289 aa).

Residues Thr134, Gly155, Asp177, and Asn225 each contribute to the S-adenosyl-L-methionine site.

The protein belongs to the methyltransferase superfamily. PrmA family.

It is found in the cytoplasm. It catalyses the reaction L-lysyl-[protein] + 3 S-adenosyl-L-methionine = N(6),N(6),N(6)-trimethyl-L-lysyl-[protein] + 3 S-adenosyl-L-homocysteine + 3 H(+). Functionally, methylates ribosomal protein L11. The sequence is that of Ribosomal protein L11 methyltransferase from Parasynechococcus marenigrum (strain WH8102).